The primary structure comprises 31 residues: MESLVYIFVFVVALGVLFFAIAFREPPRIGK.

A helical membrane pass occupies residues 3–23; that stretch reads SLVYIFVFVVALGVLFFAIAF.

Belongs to the PsbT family. As to quaternary structure, PSII is composed of 1 copy each of membrane proteins PsbA, PsbB, PsbC, PsbD, PsbE, PsbF, PsbH, PsbI, PsbJ, PsbK, PsbL, PsbM, PsbT, PsbX, PsbY, PsbZ, Psb30/Ycf12, peripheral proteins PsbO, CyanoQ (PsbQ), PsbU, PsbV and a large number of cofactors. It forms dimeric complexes.

The protein localises to the cellular thylakoid membrane. Its function is as follows. Found at the monomer-monomer interface of the photosystem II (PS II) dimer, plays a role in assembly and dimerization of PSII. PSII is a light-driven water plastoquinone oxidoreductase, using light energy to abstract electrons from H(2)O, generating a proton gradient subsequently used for ATP formation. This chain is Photosystem II reaction center protein T, found in Synechococcus elongatus (strain ATCC 33912 / PCC 7942 / FACHB-805) (Anacystis nidulans R2).